Consider the following 59-residue polypeptide: Small ribosomal subunit protein bS21 (59 aa).

The tract at residues 27 to 59 (GLMAEMRKREHYEKPSVRRKKKAQARNKKKRYA) is disordered. Residues 31-42 (EMRKREHYEKPS) are compositionally biased toward basic and acidic residues. The segment covering 43–59 (VRRKKKAQARNKKKRYA) has biased composition (basic residues).

Belongs to the bacterial ribosomal protein bS21 family.

The protein is Small ribosomal subunit protein bS21 of Carboxydothermus hydrogenoformans (strain ATCC BAA-161 / DSM 6008 / Z-2901).